Reading from the N-terminus, the 285-residue chain is N(G),N(G)-dimethylarginine dimethylaminohydrolase 1 (285 aa).

Residue Ala2 is modified to N-acetylalanine. A substrate-binding site is contributed by Leu30. Ser33 is modified (phosphoserine). Substrate is bound by residues Asp73, Glu78, Asp79, Arg98, and Arg145. His173 serves as the catalytic Proton donor. The residue at position 222 (Cys222) is an S-nitrosocysteine. Val268 is a substrate binding site. An S-nitrosocysteine modification is found at Cys274. Cys274 serves as the catalytic Nucleophile. Cys274 serves as a coordination point for Zn(2+).

The protein belongs to the DDAH family. As to quaternary structure, monomer. In terms of tissue distribution, detected in red blood cells (at protein level). Widely distributed, high amounts found in kidney, brain, aorta and pancreas.

The enzyme catalyses N(omega),N(omega)-dimethyl-L-arginine + H2O = dimethylamine + L-citrulline. The catalysed reaction is N(omega)-methyl-L-arginine + H2O = L-citrulline + methylamine. Its activity is regulated as follows. Inhibited by zinc ions. Functionally, hydrolyzes N(G),N(G)-dimethyl-L-arginine (ADMA) and N(G)-monomethyl-L-arginine (MMA) which act as inhibitors of NOS. Has therefore a role in the regulation of nitric oxide generation. This chain is N(G),N(G)-dimethylarginine dimethylaminohydrolase 1 (Ddah1), found in Rattus norvegicus (Rat).